The chain runs to 689 residues: 7SK snRNA methylphosphate capping enzyme (689 aa).

M1 is modified (N-acetylmethionine). The segment covering 1–10 (MIEMAAEKEP) has biased composition (basic and acidic residues). The disordered stretch occupies residues 1–167 (MIEMAAEKEP…GGGGFKHPAF (167 aa)). Residues 52–84 (GRCAPSAGSPAAAVGRESPGAAATSSSGPQAQQ) show a composition bias toward low complexity. S57, S60, S69, and S101 each carry phosphoserine. R117 carries the omega-N-methylarginine modification. A phosphoserine mark is found at S152, S175, and S179. A Phosphothreonine modification is found at T213. Residues S216, S217, and S254 each carry the phosphoserine modification. Positions 258-269 (TGRKRHRHRGQH) are enriched in basic residues. Residues 258–314 (TGRKRHRHRGQHHQQQQAAGGSESHPVPPTAPLTPLLHGEGASQQPRHRGQNRDAPQ) are disordered. At T291 the chain carries Phosphothreonine. 2 positions are modified to phosphoserine: S330 and S344. The disordered stretch occupies residues 332–407 (LPSALQGPSG…HHPLPAAGFK (76 aa)). A compositionally biased stretch (low complexity) spans 338–359 (GPSGSLSAPPAASVISAPPSSS). Over residues 360 to 369 (SRHRKRRRTS) the composition is skewed to basic residues. A Phosphoserine modification is found at S390. Residues Y422, R433, 451 to 453 (GCN), 474 to 475 (DI), 559 to 560 (NY), and L581 each bind S-adenosyl-L-methionine. A Bin3-type SAM domain is found at 431–686 (DGRLRVLKPE…PVYLFHKARS (256 aa)). K643 participates in a covalent cross-link: Glycyl lysine isopeptide (Lys-Gly) (interchain with G-Cter in SUMO2).

It belongs to the methyltransferase superfamily. In terms of assembly, core component of the 7SK RNP complex, at least composed of 7SK RNA, LARP7, MEPCE, HEXIM1 (or HEXIM2) and P-TEFb (composed of CDK9 and CCNT1/cyclin-T1). Interacts with METTL16. Interacts with RBM7; upon genotoxic stress this interaction is enhanced, triggering the release of inactive P-TEFb complex from the core, yielding to P-TEFb complex activation. Dephosphorylated at Ser-152 by the PNUTS-PP1 complex, promoting RNA polymerase II transcription pause-release. As to expression, expressed in chronic myeloid leukemia cells, adrenal gland, brain, cerebellum, kidney, lung, mammary gland and testis. Weakly or not expressed in other tissues.

It is found in the nucleus. The enzyme catalyses a 5'-end triphospho-guanosine-ribonucleotide-snRNA + S-adenosyl-L-methionine = a 5'-end methyltriphosphate-guanosine-ribonucleotide-snRNA + S-adenosyl-L-homocysteine. Its function is as follows. S-adenosyl-L-methionine-dependent methyltransferase that adds a methylphosphate cap at the 5'-end of 7SK snRNA (7SK RNA), leading to stabilize it. Also has a non-enzymatic function as part of the 7SK RNP complex: the 7SK RNP complex sequesters the positive transcription elongation factor b (P-TEFb) in a large inactive 7SK RNP complex preventing RNA polymerase II phosphorylation and subsequent transcriptional elongation. The 7SK RNP complex also promotes snRNA gene transcription by RNA polymerase II via interaction with the little elongation complex (LEC). In the 7SK RNP complex, MEPCE is required to stabilize 7SK RNA and facilitate the assembly of 7SK RNP complex. MEPCE has a non-enzymatic function in the 7SK RNP complex; interaction with LARP7 within the 7SK RNP complex occluding its catalytic center. Also required for stability of U6 snRNAs. This Homo sapiens (Human) protein is 7SK snRNA methylphosphate capping enzyme.